The following is a 328-amino-acid chain: Testis-specific serine/threonine-protein kinase 4 (328 aa).

Residues 25 to 293 form the Protein kinase domain; it reads YEVGKAIGHG…ILDIIKDSWV (269 aa). ATP is bound by residues 31–39 and Lys-54; that span reads IGHGSYGSV. The active-site Proton acceptor is Asp-148. At Thr-197 the chain carries Phosphothreonine.

It belongs to the protein kinase superfamily. CAMK Ser/Thr protein kinase family. Homodimer. Interacts with HSP90; this interaction stabilizes and activates TSSK4. Interacts with ODF2 (via C-terminus); this interaction promotes ODF2 phosphorylation on 'Ser-95'. May interact with CREM. Interacts with CREB1; this interaction facilitates phosphorylation on 'Ser-133'. Interacts with QRICH2. Mg(2+) serves as cofactor. Post-translationally, activated by autophosphorylation on Thr-197. ODF2 potentiates the autophosphorylation activity of TSSK4 at Thr-197. In terms of processing, ubiquitinated; HSP90 activity negatively regulates ubiquitination and degradation. As to expression, expressed only in the testis.

The protein resides in the cytoplasmic vesicle. Its subcellular location is the secretory vesicle. It localises to the acrosome. The protein localises to the cell projection. It is found in the cilium. The protein resides in the flagellum. The catalysed reaction is L-seryl-[protein] + ATP = O-phospho-L-seryl-[protein] + ADP + H(+). The enzyme catalyses L-threonyl-[protein] + ATP = O-phospho-L-threonyl-[protein] + ADP + H(+). With respect to regulation, activated by phosphorylation on Thr-197. Its function is as follows. Serine/threonine kinase which is involved in male germ cell development and in mature sperm function. May be involved in the Cre/Creb signaling pathway. Phosphorylates CREB1 on 'Ser-133' in vitro and can stimulate Cre/Creb pathway in cells. Phosphorylates CREM on 'Ser-116' in vitro. Phosphorylates ODF2 on 'Ser-95'. The protein is Testis-specific serine/threonine-protein kinase 4 of Homo sapiens (Human).